Reading from the N-terminus, the 375-residue chain is Chaperone protein DnaJ (375 aa).

The 65-residue stretch at 5-69 folds into the J domain; sequence DYYEVLGVSK…QKRAQYDQFG (65 aa). The CR-type zinc finger occupies 132–214; sequence GKETIIEIPR…CGGTGKVKKR (83 aa). Cys145, Cys148, Cys162, Cys165, Cys188, Cys191, Cys202, and Cys205 together coordinate Zn(2+). CXXCXGXG motif repeat units follow at residues 145–152, 162–169, 188–195, and 202–209; these read CETCKGSG, CSHCGGSG, CHHCEGTG, and CSDCGGTG.

The protein belongs to the DnaJ family. In terms of assembly, homodimer. Zn(2+) is required as a cofactor.

Its subcellular location is the cytoplasm. Its function is as follows. Participates actively in the response to hyperosmotic and heat shock by preventing the aggregation of stress-denatured proteins and by disaggregating proteins, also in an autonomous, DnaK-independent fashion. Unfolded proteins bind initially to DnaJ; upon interaction with the DnaJ-bound protein, DnaK hydrolyzes its bound ATP, resulting in the formation of a stable complex. GrpE releases ADP from DnaK; ATP binding to DnaK triggers the release of the substrate protein, thus completing the reaction cycle. Several rounds of ATP-dependent interactions between DnaJ, DnaK and GrpE are required for fully efficient folding. Also involved, together with DnaK and GrpE, in the DNA replication of plasmids through activation of initiation proteins. This is Chaperone protein DnaJ from Bacillus velezensis (strain DSM 23117 / BGSC 10A6 / LMG 26770 / FZB42) (Bacillus amyloliquefaciens subsp. plantarum).